We begin with the raw amino-acid sequence, 226 residues long: Small ribosomal subunit protein uS3 (226 aa).

A KH type-2 domain is found at 39–109 (IYKFFDKFTR…KLDVNLKVLT (71 aa)).

The protein belongs to the universal ribosomal protein uS3 family. In terms of assembly, part of the 30S ribosomal subunit. Forms a tight complex with proteins S10 and S14.

In terms of biological role, binds the lower part of the 30S subunit head. Binds mRNA in the 70S ribosome, positioning it for translation. The polypeptide is Small ribosomal subunit protein uS3 (Mycoplasmopsis synoviae (strain 53) (Mycoplasma synoviae)).